Reading from the N-terminus, the 196-residue chain is DnaA initiator-associating protein DiaA (196 aa).

In terms of domain architecture, SIS spans 34–196 (MVQSLLNGNK…DNTLFPHQND (163 aa)).

The protein belongs to the SIS family. DiaA subfamily. As to quaternary structure, homotetramer; dimer of dimers.

In terms of biological role, required for the timely initiation of chromosomal replication via direct interactions with the DnaA initiator protein. The protein is DnaA initiator-associating protein DiaA of Pectobacterium carotovorum subsp. carotovorum (strain PC1).